A 380-amino-acid polypeptide reads, in one-letter code: Cytochrome b (380 aa).

4 helical membrane-spanning segments follow: residues 34–54 (FGSLLGICLVTQILTGLLLAT), 78–99 (WLIRNLHANGASLFFICIYLHI), 114–134 (WNTGVILLLSLMATAFVGYVL), and 179–199 (FFALHFLLPFLIAGLTLTHLT). Heme b-binding residues include H84 and H98. Residues H183 and H197 each contribute to the heme b site. H202 is an a ubiquinone binding site. 4 helical membrane passes run 227-247 (PKDLLGFILMFLPLTALALFS), 289-309 (LGGVLALAASVLILFLAPFLH), 321-341 (LSQLLFWILVTNLLILTWVGS), and 348-368 (FIIIGQLASLAYFIILLILFP).

Belongs to the cytochrome b family. In terms of assembly, the cytochrome bc1 complex contains 11 subunits: 3 respiratory subunits (MT-CYB, CYC1 and UQCRFS1), 2 core proteins (UQCRC1 and UQCRC2) and 6 low-molecular weight proteins (UQCRH/QCR6, UQCRB/QCR7, UQCRQ/QCR8, UQCR10/QCR9, UQCR11/QCR10 and a cleavage product of UQCRFS1). This cytochrome bc1 complex then forms a dimer. It depends on heme b as a cofactor.

It localises to the mitochondrion inner membrane. Component of the ubiquinol-cytochrome c reductase complex (complex III or cytochrome b-c1 complex) that is part of the mitochondrial respiratory chain. The b-c1 complex mediates electron transfer from ubiquinol to cytochrome c. Contributes to the generation of a proton gradient across the mitochondrial membrane that is then used for ATP synthesis. The sequence is that of Cytochrome b (MT-CYB) from Todus todus (Jamaican tody).